The sequence spans 354 residues: Small ribosomal subunit protein uS2 (354 aa).

This sequence belongs to the universal ribosomal protein uS2 family.

This chain is Small ribosomal subunit protein uS2, found in Methylorubrum populi (strain ATCC BAA-705 / NCIMB 13946 / BJ001) (Methylobacterium populi).